We begin with the raw amino-acid sequence, 332 residues long: ADP-L-glycero-D-manno-heptose-6-epimerase (332 aa).

NADP(+) is bound by residues Phe-11–Ile-12, Asp-32–Asn-33, Lys-39, Lys-54, Glu-76–Ser-80, and Asn-93. The active-site Proton acceptor is Tyr-140. Lys-144 contacts NADP(+). Asn-170 contributes to the substrate binding site. NADP(+) contacts are provided by Val-171 and Lys-179. The active-site Proton acceptor is Lys-179. Substrate-binding positions include Arg-181, His-188, Phe-202–Ser-205, Arg-215, and Tyr-294.

The protein belongs to the NAD(P)-dependent epimerase/dehydratase family. HldD subfamily. Homopentamer. NADP(+) serves as cofactor.

It carries out the reaction ADP-D-glycero-beta-D-manno-heptose = ADP-L-glycero-beta-D-manno-heptose. The protein operates within nucleotide-sugar biosynthesis; ADP-L-glycero-beta-D-manno-heptose biosynthesis; ADP-L-glycero-beta-D-manno-heptose from D-glycero-beta-D-manno-heptose 7-phosphate: step 4/4. Its function is as follows. Catalyzes the interconversion between ADP-D-glycero-beta-D-manno-heptose and ADP-L-glycero-beta-D-manno-heptose via an epimerization at carbon 6 of the heptose. This Dechloromonas aromatica (strain RCB) protein is ADP-L-glycero-D-manno-heptose-6-epimerase.